The chain runs to 134 residues: Profilin-3 (134 aa).

Cysteines 13 and 118 form a disulfide. The Involved in PIP2 interaction motif lies at 84-100; sequence AVIRGKKGSGGITIKKT. Threonine 114 is modified (phosphothreonine).

Belongs to the profilin family. As to quaternary structure, occurs in many kinds of cells as a complex with monomeric actin in a 1:1 ratio. In terms of processing, phosphorylated by MAP kinases.

It localises to the cytoplasm. The protein resides in the cytoskeleton. In terms of biological role, binds to actin and affects the structure of the cytoskeleton. At high concentrations, profilin prevents the polymerization of actin, whereas it enhances it at low concentrations. The chain is Profilin-3 from Olea europaea (Common olive).